The primary structure comprises 2299 residues: Protein Ycf2 (2299 aa).

ATP is bound at residue 1642–1649; that stretch reads GSIGTGRS.

This sequence belongs to the Ycf2 family.

The protein localises to the plastid. The protein resides in the chloroplast stroma. Functionally, probable ATPase of unknown function. Its presence in a non-photosynthetic plant (Epifagus virginiana) and experiments in tobacco indicate that it has an essential function which is probably not related to photosynthesis. This is Protein Ycf2 from Nandina domestica (Heavenly bamboo).